We begin with the raw amino-acid sequence, 786 residues long: DNA ligase (786 aa).

NAD(+) contacts are provided by residues 32–36, 81–82, and Glu121; these read DAEYD and SL. Lys123 functions as the N6-AMP-lysine intermediate in the catalytic mechanism. NAD(+)-binding residues include Arg144, Glu181, Lys297, and Lys321. Residues Cys415, Cys418, Cys445, and Cys451 each coordinate Zn(2+). A BRCT domain is found at 703 to 786; sequence AEGLPLAGQT…EQLKSYGIEA (84 aa).

The protein belongs to the NAD-dependent DNA ligase family. LigA subfamily. The cofactor is Mg(2+). Mn(2+) is required as a cofactor.

It carries out the reaction NAD(+) + (deoxyribonucleotide)n-3'-hydroxyl + 5'-phospho-(deoxyribonucleotide)m = (deoxyribonucleotide)n+m + AMP + beta-nicotinamide D-nucleotide.. Its function is as follows. DNA ligase that catalyzes the formation of phosphodiester linkages between 5'-phosphoryl and 3'-hydroxyl groups in double-stranded DNA using NAD as a coenzyme and as the energy source for the reaction. It is essential for DNA replication and repair of damaged DNA. The polypeptide is DNA ligase (Ectopseudomonas mendocina (strain ymp) (Pseudomonas mendocina)).